The chain runs to 452 residues: UDP-glycosyltransferase 79B11 (452 aa).

UDP-alpha-D-glucose-binding positions include Ser-260, 319–325 (VQQPSWQ), 340–348 (HCGFGSMWE), and 362–365 (LNDQ).

The protein belongs to the UDP-glycosyltransferase family.

This is UDP-glycosyltransferase 79B11 (UGT79B11) from Arabidopsis thaliana (Mouse-ear cress).